We begin with the raw amino-acid sequence, 815 residues long: Tubulin polyglutamylase TTLL13 (815 aa).

One can recognise a TTL domain in the interval R85–E430. ATP is bound by residues K202, Q208 to G209, Q230 to I233, and K243 to D245. An a protein-binding site is contributed by Q208. R269 lines the L-glutamate pocket. T291–N292 provides a ligand contact to ATP. L-glutamate contacts are provided by Y293 and K311. 3 residues coordinate Mg(2+): D376, E389, and N391. The interval C401–G482 is c-MTBD region. Position 407 (K407) interacts with L-glutamate. The stretch at A504–T528 forms a coiled coil. A disordered region spans residues R520 to Q556. Residues A536–R550 show a composition bias toward basic and acidic residues.

It belongs to the tubulin--tyrosine ligase family. It depends on Mg(2+) as a cofactor.

The enzyme catalyses (L-glutamyl)(n)-gamma-L-glutamyl-L-glutamyl-[protein] + L-glutamate + ATP = (L-glutamyl)(n+1)-gamma-L-glutamyl-L-glutamyl-[protein] + ADP + phosphate + H(+). Functionally, polyglutamylase which modifies tubulin, generating polyglutamate side chains of variable lengths on the gamma-carboxyl group of specific glutamate residues within the C-terminal tail of tubulin. Mediates ATP-dependent polyglutamate side-chain elongation of the polyglutamylation reaction but not the initiation step. Preferentially modifies the alpha-tubulin tail over a beta-tail. The sequence is that of Tubulin polyglutamylase TTLL13 from Homo sapiens (Human).